A 31-amino-acid chain; its full sequence is Circulin-B (31 aa).

Positions 1–31 (GVIPCGESCVFIPCISTLLGCSCKNKVCYRN) form a cross-link, cyclopeptide (Gly-Asn). Disulfide bonds link Cys-5-Cys-21, Cys-9-Cys-23, and Cys-14-Cys-28.

Post-translationally, this is a cyclic peptide.

In terms of biological role, probably participates in a plant defense mechanism. Has antibiotic activity. Inhibits the cytopathic effects and replication of the human immunodeficiency virus. Active against both Gram-positive and Gram-negative bacteria. The protein is Circulin-B of Chassalia parviflora.